Consider the following 268-residue polypeptide: GTP cyclohydrolase FolE2 (268 aa).

Belongs to the GTP cyclohydrolase IV family.

It catalyses the reaction GTP + H2O = 7,8-dihydroneopterin 3'-triphosphate + formate + H(+). It participates in cofactor biosynthesis; 7,8-dihydroneopterin triphosphate biosynthesis; 7,8-dihydroneopterin triphosphate from GTP: step 1/1. Its function is as follows. Converts GTP to 7,8-dihydroneopterin triphosphate. The sequence is that of GTP cyclohydrolase FolE2 from Janthinobacterium sp. (strain Marseille) (Minibacterium massiliensis).